The sequence spans 238 residues: uncharacterized protein (238 aa).

The region spanning 1 to 64 (MRLDKYLSKS…KPKKNVYLML (64 aa)) is the S4 RNA-binding domain. D103 functions as the Nucleophile in the catalytic mechanism.

This sequence belongs to the pseudouridine synthase RsuA family.

It catalyses the reaction a uridine in RNA = a pseudouridine in RNA. This is an uncharacterized protein from Aquifex aeolicus (strain VF5).